The following is a 592-amino-acid chain: Inactive metallocarboxypeptidase ECM14 (592 aa).

The first 21 residues, 1-21 (MRQFTHGTLLAILALANTISA), serve as a signal peptide directing secretion. The propeptide occupies 22 to 174 (IPSFSANNYP…QTVYESYPSS (153 aa)). Residues 170-179 (SYPSSSQRPT) are compositionally biased toward polar residues. The tract at residues 170 to 191 (SYPSSSQRPTDNGRGFLPSRES) is disordered. In terms of domain architecture, Peptidase M14 spans 202-521 (DYQPLSVIGP…NAVMVLAKFL (320 aa)). The Zn(2+) site is built by His264 and Glu267. Substrate contacts are provided by residues 264 to 267 (HARE), Arg322, and 339 to 340 (DR). Cysteines 333 and 356 form a disulfide. A glycan (N-linked (GlcNAc...) asparagine) is linked at Asn349. Position 396 (His396) interacts with Zn(2+). Position 397–398 (397–398 (SY)) interacts with substrate. Positions 542–592 (ADKPILDDGDDDEEEDGQDKKDDSWIPDEYKNDNDHDDDDDGWGLRRRRKR) are disordered. Over residues 548-558 (DDGDDDEEEDG) the composition is skewed to acidic residues. A compositionally biased stretch (basic and acidic residues) spans 559–575 (QDKKDDSWIPDEYKNDN).

The protein belongs to the peptidase M14 family. Zn(2+) is required as a cofactor.

The protein resides in the vacuole. It localises to the secreted. Functionally, inactive carboxypeptidase that may play a role in cell wall organization and biogenesis. In Ajellomyces dermatitidis (strain ER-3 / ATCC MYA-2586) (Blastomyces dermatitidis), this protein is Inactive metallocarboxypeptidase ECM14 (ECM14).